The following is a 175-amino-acid chain: Nucleoside diphosphate kinase 6 (175 aa).

Positions 15, 63, 91, 97, 111, and 121 each coordinate ATP. The Pros-phosphohistidine intermediate role is filled by His124.

This sequence belongs to the NDK family. Mg(2+) serves as cofactor.

The catalysed reaction is a 2'-deoxyribonucleoside 5'-diphosphate + ATP = a 2'-deoxyribonucleoside 5'-triphosphate + ADP. It catalyses the reaction a ribonucleoside 5'-diphosphate + ATP = a ribonucleoside 5'-triphosphate + ADP. Major role in the synthesis of nucleoside triphosphates other than ATP. The ATP gamma phosphate is transferred to the NDP beta phosphate via a ping-pong mechanism, using a phosphorylated active-site intermediate. This Danio rerio (Zebrafish) protein is Nucleoside diphosphate kinase 6 (nme6).